The sequence spans 742 residues: RING finger protein 145 homolog (742 aa).

11 consecutive transmembrane segments (helical) span residues 109–129, 138–158, 178–198, 233–253, 285–305, 318–338, 368–388, 395–415, 438–458, 463–483, and 533–553; these read AAII…TLPL, HFLS…YVDL, HGFH…LLEV, ACTG…PSLI, ILEL…YVEL, ILLT…ALAV, SGYT…FLGM, ILLA…LFEI, ICIA…MLAL, IYTA…IGVI, and VKVG…IVNI. An RING-type; atypical zinc finger spans residues 592-630; it reads CAICFIEMKEEARITPCKHYFHGPCLRKWLAVKMVCPLC. 2 disordered regions span residues 642-684 and 722-742; these read KSSS…PGDM and AYES…ENNN. The span at 659 to 672 shows a compositional bias: acidic residues; sequence AAVEENPENPEEQP.

It localises to the membrane. It is found in the golgi apparatus. Its subcellular location is the cis-Golgi network. The protein resides in the trans-Golgi network. It carries out the reaction S-ubiquitinyl-[E2 ubiquitin-conjugating enzyme]-L-cysteine + [acceptor protein]-L-lysine = [E2 ubiquitin-conjugating enzyme]-L-cysteine + N(6)-ubiquitinyl-[acceptor protein]-L-lysine.. E3 ubiquitin ligase that catalyzes the direct transfer of ubiquitin from E2 ubiquitin-conjugating enzyme to a specific substrate. Acting downstream of probable Golgi transport protein eas-1, involved in inhibition of activation of transcription factor sbp-1, thereby playing a role in regulating AMsh glial cell size. This chain is RING finger protein 145 homolog, found in Caenorhabditis elegans.